A 142-amino-acid polypeptide reads, in one-letter code: Galactose-6-phosphate isomerase subunit LacA (142 aa).

The protein belongs to the LacAB/RpiB family. Heteromultimeric protein consisting of LacA and LacB.

The catalysed reaction is aldehydo-D-galactose 6-phosphate = keto-D-tagatose 6-phosphate. The protein operates within carbohydrate metabolism; D-galactose 6-phosphate degradation; D-tagatose 6-phosphate from D-galactose 6-phosphate: step 1/1. This chain is Galactose-6-phosphate isomerase subunit LacA, found in Enterococcus faecalis (strain ATCC 700802 / V583).